Here is a 149-residue protein sequence, read N- to C-terminus: Ribonuclease pancreatic (149 aa).

Positions 1–25 (MGLENSLILFSLLVLVLGWVQPSLG) are cleaved as a signal peptide. Residues 25–62 (GKESSPDKFKRQHMDTEGSSKSSPTYCNQMRSPQEMTK) are disordered. The span at 28–42 (SSPDKFKRQHMDTEG) shows a compositional bias: basic and acidic residues. The substrate site is built by Lys-32 and Arg-35. His-37 serves as the catalytic Proton acceptor. A compositionally biased stretch (polar residues) spans 43-61 (SSKSSPTYCNQMRSPQEMT). Disulfide bonds link Cys-51–Cys-109, Cys-65–Cys-120, Cys-83–Cys-135, and Cys-90–Cys-97. Substrate-binding positions include 66–70 (KPVNT) and Lys-91. His-144 (proton donor) is an active-site residue.

Belongs to the pancreatic ribonuclease family. Monomer. Interacts with and forms tight 1:1 complexes with RNH1. Dimerization of two such complexes may occur. Interaction with RNH1 inhibits this protein.

The protein resides in the secreted. It carries out the reaction an [RNA] containing cytidine + H2O = an [RNA]-3'-cytidine-3'-phosphate + a 5'-hydroxy-ribonucleotide-3'-[RNA].. The enzyme catalyses an [RNA] containing uridine + H2O = an [RNA]-3'-uridine-3'-phosphate + a 5'-hydroxy-ribonucleotide-3'-[RNA].. Functionally, endonuclease that catalyzes the cleavage of RNA on the 3' side of pyrimidine nucleotides. Acts on single-stranded and double-stranded RNA. In Sundamys muelleri (Mueller's giant sunda rat), this protein is Ribonuclease pancreatic (RNASE1).